A 356-amino-acid chain; its full sequence is Thrombomodulin (356 aa).

The Extracellular portion of the chain corresponds to 1 to 296; that stretch reads RGARGETEGR…SPAPAGPLHS (296 aa). EGF-like domains lie at 17-57 and 60-98; these read GAWA…RSCG and AEHP…HRCE. 18 cysteine pairs are disulfide-bonded: Cys-21/Cys-32, Cys-28/Cys-41, Cys-43/Cys-56, Cys-64/Cys-72, Cys-68/Cys-82, Cys-84/Cys-97, Cys-103/Cys-114, Cys-110/Cys-123, Cys-125/Cys-136, Cys-143/Cys-152, Cys-148/Cys-162, Cys-164/Cys-178, Cys-182/Cys-191, Cys-187/Cys-199, Cys-201/Cys-213, Cys-219/Cys-228, Cys-224/Cys-237, and Cys-239/Cys-253. In terms of domain architecture, EGF-like 3; calcium-binding spans 99–137; the sequence is DVDDCAQLPSPCPQRCVNTEGGFQCHCDTGYELVDGECV. EGF-like domains are found at residues 139-179 and 178-214; these read PVDP…HKCQ and CQMF…STCT. The EGF-like 6; calcium-binding domain occupies 215 to 254; the sequence is DINECDTNICPGQCHNLPGTYECICGPDSALSGQIGIDCD. Residues 255–290 form a disordered region; sequence PTQVNEERGTPEDYGGSGEPPVSPTPGATARPSPAP. Ser-271 carries an O-linked (Xyl...) (chondroitin sulfate) serine glycan. A helical membrane pass occupies residues 297–320; the sequence is GVLVGISIASLSLVVALLALLCHL. Over 321 to 356 the chain is Cytoplasmic; that stretch reads RKKQGASRGELEYKCGVPAKELMLQQVKTERTPQKL.

In terms of assembly, interacts with ITGAL, ITGAM and ITGB2. Interacts with thrombin/F2; this interaction switches the specificity of thrombin from a procoagulant to an anticoagulant and antifibrinolytic protease. Interacts with ANGP1 and ANGP2; these interactions significantly inhibit the generation of activated PC and TAFIa/CPB2 by the thrombin/thrombomodulin complex. Interacts with PF4; this interaction enhances generation of activated protein C. Interacts with HMGB1; this interaction inhibits HMGB1 inflammatory activity. In terms of tissue distribution, endothelial cells are unique in synthesizing thrombomodulin.

It is found in the membrane. Endothelial cell receptor that plays a critical role in regulating several physiological processes including hemostasis, coagulation, fibrinolysis, inflammation, and angiogenesis. Acts as a cofactor for thrombin activation of protein C/PROC on the surface of vascular endothelial cells leading to initiation of the activated protein C anticoagulant pathway. Also accelerates the activation of the plasma carboxypeptidase B2/CPB2, which catalyzes removal of C-terminal basic amino acids from its substrates including kinins or anaphylatoxins leading to fibrinolysis inhibition. Plays critical protective roles in changing the cleavage specificity of protease-activated receptor 1/PAR1, inhibiting endothelial cell permeability and inflammation. Suppresses inflammation distinctly from its anticoagulant cofactor activity by sequestering HMGB1 thereby preventing it from engaging cellular receptors such as RAGE and contributing to the inflammatory response. The chain is Thrombomodulin (THBD) from Bos taurus (Bovine).